A 598-amino-acid polypeptide reads, in one-letter code: CBP80/20-dependent translation initiation factor (598 aa).

N-acetylmethionine is present on methionine 1. A compositionally biased stretch (low complexity) spans 1-18 (MENSSAASASSEAGSSRS). Disordered regions lie at residues 1–20 (MENS…RSQE), 43–90 (DKTE…SKDN), and 180–336 (IAHT…RIGE). An interaction with NCBP1/CBP80 region spans residues 1-305 (MENSSAASAS…APRSPDTLAP (305 aa)). A Phosphoserine modification is found at serine 18. Residues 43–55 (DKTEGDGESERTQ) show a composition bias toward basic and acidic residues. Polar residues predominate over residues 56–75 (SHISQWTADCSEPLDSSCSF). Residues 183-198 (TKKLFRRRRNDRRRQQ) show a composition bias toward basic residues. The span at 258 to 272 (PPGDKGEAGAHRNAK) shows a compositional bias: basic and acidic residues. Threonine 289 is modified (phosphothreonine). Residue serine 299 is modified to Phosphoserine. Basic and acidic residues predominate over residues 321 to 336 (VETKRKDSILPERIGE). An MIF4G domain is found at 376–577 (IEILNSMRNN…LEVIELHANS (202 aa)).

This sequence belongs to the CTIF family. As to quaternary structure, interacts with NCBP1/CBP80; the interaction is direct. Associates with the eukaryotic translation initiation factor 3 (eIF-3) complex. As to expression, widely expressed.

Its subcellular location is the cytoplasm. It is found in the perinuclear region. Its function is as follows. Specifically required for the pioneer round of mRNA translation mediated by the cap-binding complex (CBC), that takes place during or right after mRNA export via the nuclear pore complex (NPC). Acts via its interaction with the NCBP1/CBP80 component of the CBC complex and recruits the 40S small subunit of the ribosome via eIF3. In contrast, it is not involved in steady state translation, that takes place when the CBC complex is replaced by cytoplasmic cap-binding protein eIF4E. Also required for nonsense-mediated mRNA decay (NMD), the pioneer round of mRNA translation mediated by the cap-binding complex playing a central role in nonsense-mediated mRNA decay (NMD). The sequence is that of CBP80/20-dependent translation initiation factor (CTIF) from Homo sapiens (Human).